The sequence spans 212 residues: Uracil phosphoribosyltransferase (212 aa).

5-phospho-alpha-D-ribose 1-diphosphate-binding positions include R78, R103, and 130-138 (DPMLATGGS). Uracil contacts are provided by residues I193 and 198 to 200 (GDA). D199 is a binding site for 5-phospho-alpha-D-ribose 1-diphosphate.

Belongs to the UPRTase family. It depends on Mg(2+) as a cofactor.

The catalysed reaction is UMP + diphosphate = 5-phospho-alpha-D-ribose 1-diphosphate + uracil. It participates in pyrimidine metabolism; UMP biosynthesis via salvage pathway; UMP from uracil: step 1/1. Allosterically activated by GTP. In terms of biological role, catalyzes the conversion of uracil and 5-phospho-alpha-D-ribose 1-diphosphate (PRPP) to UMP and diphosphate. The chain is Uracil phosphoribosyltransferase from Pseudomonas aeruginosa (strain LESB58).